Consider the following 55-residue polypeptide: Large ribosomal subunit protein bL33B (55 aa).

The protein belongs to the bacterial ribosomal protein bL33 family.

The polypeptide is Large ribosomal subunit protein bL33B (Salinispora tropica (strain ATCC BAA-916 / DSM 44818 / JCM 13857 / NBRC 105044 / CNB-440)).